The sequence spans 82 residues: Putative membrane protein insertion efficiency factor (82 aa).

This sequence belongs to the UPF0161 family.

Its subcellular location is the cell inner membrane. Its function is as follows. Could be involved in insertion of integral membrane proteins into the membrane. The polypeptide is Putative membrane protein insertion efficiency factor (Rickettsia africae (strain ESF-5)).